A 242-amino-acid polypeptide reads, in one-letter code: Derlin-1 (242 aa).

Topologically, residues 1 to 20 are cytoplasmic; it reads MSSPAEYYNSLPPISKAYGT. The chain crosses the membrane as a helical span at residues 21 to 41; sequence LCFFATVLCQLQILNPPFLAL. Topologically, residues 42–55 are lumenal; the sequence is YYPFVFKKFQIWRL. The helical transmembrane segment at 56-76 threads the bilayer; sequence FTSFFFLGKFSINFGIRLLMI. Residues 77–94 lie on the Cytoplasmic side of the membrane; that stretch reads ARYGVQLEKGAFEKRTAD. A helical membrane pass occupies residues 95–115; the sequence is FLWMMIFGAISLLALSAIPFL. Topologically, residues 116–157 are lumenal; the sequence is DIYFLGVPMVSMLLYVWSREYPNSQISMYGLVQLRSFYLPWA. Residues 158 to 178 form a helical membrane-spanning segment; the sequence is MLGLDVIFGSEILPGLLGILV. Over 179-242 the chain is Cytoplasmic; it reads GHTYYFLSVL…FRGRSYRLSQ (64 aa).

It belongs to the derlin family. In terms of tissue distribution, seedling shoots and roots.

The protein localises to the endoplasmic reticulum membrane. Its function is as follows. May be involved in the degradation process of specific misfolded endoplasmic reticulum (ER) luminal proteins. The protein is Derlin-1 (DER1) of Oryza sativa subsp. japonica (Rice).